The following is a 270-amino-acid chain: Glutamate racemase (270 aa).

Residues 14–15 and 46–47 each bind substrate; these read DS and YG. The active-site Proton donor/acceptor is Cys77. Substrate is bound at residue 78–79; sequence NT. The active-site Proton donor/acceptor is Cys189. Substrate is bound at residue 190–191; the sequence is TH.

This sequence belongs to the aspartate/glutamate racemases family.

It catalyses the reaction L-glutamate = D-glutamate. It functions in the pathway cell wall biogenesis; peptidoglycan biosynthesis. Provides the (R)-glutamate required for cell wall biosynthesis. This chain is Glutamate racemase, found in Neisseria meningitidis serogroup C.